The primary structure comprises 149 residues: Cell division protein SepF (149 aa).

The tract at residues 12 to 57 (SNEEDDYYEEDGYEQSQQQEQQTTQQTSSQPRFVRQTTQSQTPAGL) is disordered. Positions 13–24 (NEEDDYYEEDGY) are enriched in acidic residues. A compositionally biased stretch (low complexity) spans 25–41 (EQSQQQEQQTTQQTSSQ). Residues 46–57 (RQTTQSQTPAGL) show a composition bias toward polar residues.

Belongs to the SepF family. In terms of assembly, homodimer. Interacts with FtsZ.

It localises to the cytoplasm. Its function is as follows. Cell division protein that is part of the divisome complex and is recruited early to the Z-ring. Probably stimulates Z-ring formation, perhaps through the cross-linking of FtsZ protofilaments. Its function overlaps with FtsA. In Leuconostoc mesenteroides subsp. mesenteroides (strain ATCC 8293 / DSM 20343 / BCRC 11652 / CCM 1803 / JCM 6124 / NCDO 523 / NBRC 100496 / NCIMB 8023 / NCTC 12954 / NRRL B-1118 / 37Y), this protein is Cell division protein SepF.